The following is a 569-amino-acid chain: uncharacterized protein (569 aa).

An N-terminal signal peptide occupies residues Met1–Ala21. Over Lys22–Lys530 the chain is Extracellular. Residues Ala531–Phe551 form a helical membrane-spanning segment. Residues Tyr552 to Gly569 are Cytoplasmic-facing.

The protein localises to the cell membrane. This is an uncharacterized protein from Bacillus subtilis (strain 168).